The sequence spans 379 residues: Sulfate adenylyltransferase (379 aa).

This sequence belongs to the sulfate adenylyltransferase family.

The catalysed reaction is sulfate + ATP + H(+) = adenosine 5'-phosphosulfate + diphosphate. It functions in the pathway sulfur metabolism; hydrogen sulfide biosynthesis; sulfite from sulfate: step 1/3. The sequence is that of Sulfate adenylyltransferase (sat) from Pyrococcus abyssi (strain GE5 / Orsay).